A 202-amino-acid polypeptide reads, in one-letter code: Small ribosomal subunit protein uS4 (202 aa).

A compositionally biased stretch (basic residues) spans 1–13 (MSRYRGPRLRVTR). The segment at 1–42 (MSRYRGPRLRVTRRLGELPGLTRKASKKSNPPGQHGQARRKR) is disordered. The S4 RNA-binding domain occupies 90-152 (NRLDNVCFRL…KASKKLVEGN (63 aa)).

This sequence belongs to the universal ribosomal protein uS4 family. As to quaternary structure, part of the 30S ribosomal subunit. Contacts protein S5. The interaction surface between S4 and S5 is involved in control of translational fidelity.

Functionally, one of the primary rRNA binding proteins, it binds directly to 16S rRNA where it nucleates assembly of the body of the 30S subunit. Its function is as follows. With S5 and S12 plays an important role in translational accuracy. This chain is Small ribosomal subunit protein uS4, found in Prochlorococcus marinus (strain MIT 9312).